Here is a 339-residue protein sequence, read N- to C-terminus: Glyceraldehyde-3-phosphate dehydrogenase (339 aa).

NAD(+)-binding positions include 13–14 (RI), D35, and K84. Residues 156-158 (SCT), T187, 216-217 (TG), and R239 each bind D-glyceraldehyde 3-phosphate. Residue C157 is the Nucleophile of the active site. N321 is an NAD(+) binding site.

Belongs to the glyceraldehyde-3-phosphate dehydrogenase family. Homotetramer.

The protein localises to the cytoplasm. It catalyses the reaction D-glyceraldehyde 3-phosphate + phosphate + NAD(+) = (2R)-3-phospho-glyceroyl phosphate + NADH + H(+). Its pathway is carbohydrate degradation; glycolysis; pyruvate from D-glyceraldehyde 3-phosphate: step 1/5. The polypeptide is Glyceraldehyde-3-phosphate dehydrogenase (G3PD) (Brugia malayi (Filarial nematode worm)).